Here is a 227-residue protein sequence, read N- to C-terminus: MMTKKAITVLSGGLDSCVATCVYAEDYEIHGITFNYGQKSFKQELKASEEICKKMGFTHEVIDLPWLNKISNSSLTSDNEIPTLTHEELDDLDICEDTASSVWVPGRNIVFTSIATSYAESIGAEIIIVGWDKEEAATFPDNSKEFLESFNNMLNVGSPQNIEIKAPAIDLNKDEIVKLGDEIKAPMELSYSCYTGHEKHCGVCESCMRRKRAFKLADVKDPSEYNE.

10–20 (LSGGLDSCVAT) contacts ATP. 4 residues coordinate Zn(2+): C193, C201, C204, and C207.

The protein belongs to the QueC family. Requires Zn(2+) as cofactor.

The catalysed reaction is 7-carboxy-7-deazaguanine + NH4(+) + ATP = 7-cyano-7-deazaguanine + ADP + phosphate + H2O + H(+). Its pathway is purine metabolism; 7-cyano-7-deazaguanine biosynthesis. Catalyzes the ATP-dependent conversion of 7-carboxy-7-deazaguanine (CDG) to 7-cyano-7-deazaguanine (preQ(0)). The protein is 7-cyano-7-deazaguanine synthase of Methanobrevibacter smithii (strain ATCC 35061 / DSM 861 / OCM 144 / PS).